The following is a 150-amino-acid chain: UPF0506 protein SJCHGC03047 (150 aa).

The signal sequence occupies residues 1–18 (MNTCIQLLILCLVTLTNS). 3 N-linked (GlcNAc...) asparagine glycosylation sites follow: Asn20, Asn48, and Asn110. Intrachain disulfides connect Cys116/Cys130, Cys123/Cys134, and Cys129/Cys139.

Belongs to the UPF0506 family.

Its subcellular location is the secreted. The chain is UPF0506 protein SJCHGC03047 from Schistosoma japonicum (Blood fluke).